A 922-amino-acid polypeptide reads, in one-letter code: Lysine-specific demethylase 4 (922 aa).

A compositionally biased stretch (polar residues) spans 1–15; it reads MASAATTTHFPSSRI. Disordered stretches follow at residues 1 to 21 and 42 to 61; these read MASA…EPCA and SSSC…MFTD. The region spanning 87-130 is the JmjN domain; it reads VLTFYPTMREFKNFSQYIKKIEQNGGHLKAGIAKIVAPEGWTPR. Tyr-213 is a binding site for 2-oxoglutarate. The JmjC domain occupies 223 to 388; it reads DAQVEEWNMN…YGKDAVLCDC (166 aa). His-265 and Glu-267 together coordinate Fe cation. 2-oxoglutarate contacts are provided by Asn-275 and Lys-283. Zn(2+) is bound by residues Cys-314 and His-320. A 2-oxoglutarate-binding site is contributed by Lys-321. His-356 serves as a coordination point for Fe cation. Zn(2+)-binding residues include Cys-386 and Cys-388. A disordered region spans residues 435–475; that stretch reads KRRQSLADASKIAKRARLGASSTATDSDGSSGSSGSEEATE. Residues 453 to 475 are compositionally biased toward low complexity; that stretch reads GASSTATDSDGSSGSSGSEEATE. The C2HC pre-PHD-type zinc-finger motif lies at 639-675; that stretch reads TTSCQLCELRGGALIPCQIGTDSTWAHVACALFNRRA. The segment at 723-783 adopts a PHD-type; degenerate zinc-finger fold; it reads WECVVCHRTD…GVVMICHKHE (61 aa).

It belongs to the JHDM3 histone demethylase family. Fe(2+) serves as cofactor.

The protein resides in the nucleus. The enzyme catalyses N(6),N(6),N(6)-trimethyl-L-lysyl(9)-[histone H3] + 2 2-oxoglutarate + 2 O2 = N(6)-methyl-L-lysyl(9)-[histone H3] + 2 formaldehyde + 2 succinate + 2 CO2. It carries out the reaction N(6),N(6),N(6)-trimethyl-L-lysyl(36)-[histone H3] + 2 2-oxoglutarate + 2 O2 = N(6)-methyl-L-lysyl(36)-[histone H3] + 2 formaldehyde + 2 succinate + 2 CO2. In terms of biological role, histone demethylase that specifically demethylates 'Lys-9' and 'Lys-36' residues of histone H3, thereby playing a central role in histone code. Demethylation of Lys residue generates formaldehyde and succinate. Involved in the negative regulation of lifespan in a germline-dependent fashion. The sequence is that of Lysine-specific demethylase 4 (jmjd-2) from Caenorhabditis elegans.